The sequence spans 371 residues: Deoxyuridine 5'-triphosphate nucleotidohydrolase (371 aa).

Residues 260–262 and 366–367 each bind substrate; these read RSS and FG. The disordered stretch occupies residues 350–371; that stretch reads NEFDAEAPPSERGTGGFGSTGI. The span at 362 to 371 shows a compositional bias: gly residues; it reads GTGGFGSTGI.

Belongs to the dUTPase family. Requires Mg(2+) as cofactor.

The enzyme catalyses dUTP + H2O = dUMP + diphosphate + H(+). Functionally, involved in nucleotide metabolism: produces dUMP, the immediate precursor of thymidine nucleotides and decreases the intracellular concentration of dUTP to avoid uracil incorporation into viral DNA. The chain is Deoxyuridine 5'-triphosphate nucleotidohydrolase from Homo sapiens (Human).